The following is a 104-amino-acid chain: Glycine-rich protein (104 aa).

Positions 1 to 18 (MKSMIAAILFALVATSLA) are cleaved as a signal peptide.

It belongs to the non-disulfide-bridged peptide (NDBP) superfamily. In terms of tissue distribution, expressed by the venom gland.

The protein resides in the secreted. The protein is Glycine-rich protein of Lychas mucronatus (Chinese swimming scorpion).